Reading from the N-terminus, the 152-residue chain is Holo-[acyl-carrier-protein] synthase (152 aa).

2 residues coordinate Mg(2+): Asp7 and Glu60.

This sequence belongs to the P-Pant transferase superfamily. AcpS family. The cofactor is Mg(2+).

The protein localises to the cytoplasm. It catalyses the reaction apo-[ACP] + CoA = holo-[ACP] + adenosine 3',5'-bisphosphate + H(+). Transfers the 4'-phosphopantetheine moiety from coenzyme A to a Ser of acyl-carrier-protein. The sequence is that of Holo-[acyl-carrier-protein] synthase from Bifidobacterium adolescentis (strain ATCC 15703 / DSM 20083 / NCTC 11814 / E194a).